Reading from the N-terminus, the 244-residue chain is Putative ABC transporter ATP-binding protein gll0289 (244 aa).

The 233-residue stretch at 5-237 (LVVEELHYSY…RVLLETHGLE (233 aa)) folds into the ABC transporter domain. Position 38-45 (38-45 (GPNGSGKS)) interacts with ATP.

It belongs to the ABC transporter superfamily.

Its subcellular location is the cell inner membrane. In terms of biological role, probably part of an ABC transporter complex. Responsible for energy coupling to the transport system. This is Putative ABC transporter ATP-binding protein gll0289 from Gloeobacter violaceus (strain ATCC 29082 / PCC 7421).